The primary structure comprises 208 residues: Guanylate kinase (208 aa).

Residues 4–185 (GNLYILSAPS…TLKDLQSILQ (182 aa)) form the Guanylate kinase-like domain. An ATP-binding site is contributed by 11–18 (APSGAGKS).

This sequence belongs to the guanylate kinase family.

Its subcellular location is the cytoplasm. It carries out the reaction GMP + ATP = GDP + ADP. Essential for recycling GMP and indirectly, cGMP. The chain is Guanylate kinase from Haemophilus influenzae (strain 86-028NP).